A 230-amino-acid chain; its full sequence is MAKLVLIRHGQSEWNLSNQFTGWVDVDLSEKGVEEAKAAGQKVKEAGLEFDYAFTSVLTRAIKTLHYVLEESDQLWIPETKTWRLNERHYGALQGLNKKETAEKYGDDQVHIWRRSYDVLPPLLSADDEGSAVNDRRYADLDPNIVPGGENLKVTLERVMPFWEDQIAPKLLDGKNVIIAAHGNSLRALSKYIEQISDDDIMDLEMATGEPVVYDFDEKLKVLGKEKLGK.

Residues 8 to 15 (RHGQSEWN), 21 to 22 (TG), arginine 60, 87 to 90 (ERHY), lysine 98, 114 to 115 (RR), and 183 to 184 (GN) contribute to the substrate site. The active-site Tele-phosphohistidine intermediate is histidine 9. Catalysis depends on glutamate 87, which acts as the Proton donor/acceptor.

The protein belongs to the phosphoglycerate mutase family. BPG-dependent PGAM subfamily.

It catalyses the reaction (2R)-2-phosphoglycerate = (2R)-3-phosphoglycerate. It functions in the pathway carbohydrate degradation; glycolysis; pyruvate from D-glyceraldehyde 3-phosphate: step 3/5. Functionally, catalyzes the interconversion of 2-phosphoglycerate and 3-phosphoglycerate. This Lactiplantibacillus plantarum (strain ATCC BAA-793 / NCIMB 8826 / WCFS1) (Lactobacillus plantarum) protein is 2,3-bisphosphoglycerate-dependent phosphoglycerate mutase 2.